The sequence spans 259 residues: Small ribosomal subunit protein uS2 (259 aa).

The protein belongs to the universal ribosomal protein uS2 family.

This is Small ribosomal subunit protein uS2 from Streptococcus pneumoniae (strain 70585).